The chain runs to 285 residues: RNA exonuclease 4 (285 aa).

Positions 1–14 (MAKLSQNWKKLSSK) are enriched in polar residues. The disordered stretch occupies residues 1-35 (MAKLSQNWKKLSSKIQDKPKNGSVKKPTLKGKISK). In terms of domain architecture, Exonuclease spans 116–267 (YVAIDCEFVG…EDARATMLLF (152 aa)).

The protein belongs to the REXO4 family.

The protein resides in the nucleus. Exoribonuclease involved in ribosome biosynthesis. Involved in the processing of ITS1, the internal transcribed spacer localized between the 18S and 5.8S rRNAs. This Candida albicans (strain SC5314 / ATCC MYA-2876) (Yeast) protein is RNA exonuclease 4 (REX4).